A 129-amino-acid chain; its full sequence is Ig kappa chain V-IV region S107B (129 aa).

The signal sequence occupies residues 1-22; it reads MDLQVQIIXFLLISVTVIMSRG. The framework-1 stretch occupies residues 23–45; sequence ENVLTQSPAIMAASLGQKVTMTC. Cysteine 45 and cysteine 111 form a disulfide bridge. The interval 46-57 is complementarity-determining-1; it reads SASSSVSSSYLH. The interval 58-72 is framework-2; that stretch reads WYQQKSGASPKPLIH. The tract at residues 73–79 is complementarity-determining-2; that stretch reads RTSNLAS. Residues 80–111 form a framework-3 region; that stretch reads GVPARFSGSGSGTSYSLTISSVEAEDDATYYC. The interval 112–118 is complementarity-determining-3; the sequence is QQWSGYP. The tract at residues 119 to 128 is framework-4; the sequence is FGSGTKLEIK.

This is Ig kappa chain V-IV region S107B from Mus musculus (Mouse).